Here is a 345-residue protein sequence, read N- to C-terminus: MVGIVGYGAYVPSYRIKVEEIAKVWGDDPVALSRGLVVNEKSVPSADEDTATIAVTAARYALARAQIDPQKIGAIYVGSESHPYAVKPSATIVAEAINATPDLTAADLEFACKAGTAGIQMTMGLVDSDMIEYGLAIGADTSQGAPGDALEYTASAGGAAYIIGKDNTLADIEETYSFTTDTPDFYRREGQDYPSHGGRFTGEPAYFKHVLSAAKGLFEKTDSKPEDYDYACFHQPNGKFYLRAGKKLGFTSEQIKQGLLTPNIGNTYSGAVPLALSNILDVAEPGDKIFVVSYGSGAGSDGFTLTVNEEIKEKRDLAPKTQDIIDRKQYVDYAVYAKFKGKIKM.

Position 28 (Asp-28) interacts with (3S)-3-hydroxy-3-methylglutaryl-CoA. Glu-80 functions as the Proton donor/acceptor in the catalytic mechanism. (3S)-3-hydroxy-3-methylglutaryl-CoA contacts are provided by Cys-112 and Thr-153. Cys-112 (acyl-thioester intermediate) is an active-site residue. Arg-199 contributes to the CoA binding site. (3S)-3-hydroxy-3-methylglutaryl-CoA is bound by residues Thr-201 and His-234. The active-site Proton donor/acceptor is the His-234. Position 239 (Lys-239) interacts with CoA. (3S)-3-hydroxy-3-methylglutaryl-CoA contacts are provided by Arg-243, Asn-266, and Ser-296.

It belongs to the thiolase-like superfamily. Archaeal HMG-CoA synthase family. In terms of assembly, interacts with acetoacetyl-CoA thiolase that catalyzes the precedent step in the pathway and with a DUF35 protein. The acetoacetyl-CoA thiolase/HMG-CoA synthase complex channels the intermediate via a fused CoA-binding site, which allows for efficient coupling of the endergonic thiolase reaction with the exergonic HMGCS reaction.

It carries out the reaction acetoacetyl-CoA + acetyl-CoA + H2O = (3S)-3-hydroxy-3-methylglutaryl-CoA + CoA + H(+). Its pathway is metabolic intermediate biosynthesis; (R)-mevalonate biosynthesis; (R)-mevalonate from acetyl-CoA: step 2/3. Catalyzes the condensation of acetyl-CoA with acetoacetyl-CoA to form 3-hydroxy-3-methylglutaryl-CoA (HMG-CoA). Functions in the mevalonate (MVA) pathway leading to isopentenyl diphosphate (IPP), a key precursor for the biosynthesis of isoprenoid compounds that are building blocks of archaeal membrane lipids. The chain is Hydroxymethylglutaryl-CoA synthase from Methanobrevibacter smithii (strain ATCC 35061 / DSM 861 / OCM 144 / PS).